The primary structure comprises 841 residues: MFASVLKKIVGTKNDRELKKYSLIQREINALESSIAALSDEQLKEKTPYFKEKLHTGASLDDILPEAFAVVREVARRTVNMRPFDVQLIGGMVLHEGKIAEMKTGEGKTLVATMPMYLNALEGKGAHLVTVNDYLASRDAEWMSPIYSFLGLSVGVIVHGMDDDERRAAYACDITYGTNNEFGFDYLRDNMKYSLEDYTQREFNYSIVDEVDSILIDEARTPLIISGPSEESTDKYYRINQIIPRLKKERDYTIDEKSRTVVLTEEGVARVESYLNVSNLYEPRNIDTLHHVNQALKAHTLFKRDVDYLVKDGQVIIVDEFTGRIMPGRRYSDGLHQALEAKEKVKIEQENQTLASITFQNFFRMYSKLAGMTGTADTEAAEFKKIYNLDVVVVPTNMPMIRVDHTDVIYKTEKEKFSAVIEEIKELHKAKRPVLVGTISIEKSELLSKYLTQTGIQHHVLNAKNHEKEAEIVSQAGQPGQVTISTNMAGRGTDIKLGERVAELGGLHILGTERHESRRIDNQLRGRSGRQGDMGSSRFYLSLEDDLLRIFGAEKISSIMDKIGIEENQPIEHKLISRAIENAQKRVEGQNFDIRKHLLEYDDVMNRQRQVIYEQRRNVLKGDELREDLLDMIEEVVEDFVPEYVDEKRHPDEWNLKGLEDRVLKQFSLRLDFSKSGDVGSLEDIQEKIVAAVNDLLNRKEAEFGKPLMDYLIRMISIQSIDSHWKDHLLAMDHLKEGIGLRGYGQKDPVREYQKEGYDLFMDMIRRIKEDTLEKLCMVQIRREEEVEEMREQSRQNYIMNRGEDIAAPATVRRKNEKVGRNDPCPCGSGKKYKKCCGANK.

Residues Gln-87, 105-109 (GEGKT), and Asp-494 each bind ATP. Zn(2+) contacts are provided by Cys-825, Cys-827, Cys-836, and Cys-837.

The protein belongs to the SecA family. In terms of assembly, monomer and homodimer. Part of the essential Sec protein translocation apparatus which comprises SecA, SecYEG and auxiliary proteins SecDF-YajC and YidC. Zn(2+) is required as a cofactor.

The protein resides in the cell inner membrane. The protein localises to the cytoplasm. It catalyses the reaction ATP + H2O + cellular proteinSide 1 = ADP + phosphate + cellular proteinSide 2.. Its function is as follows. Part of the Sec protein translocase complex. Interacts with the SecYEG preprotein conducting channel. Has a central role in coupling the hydrolysis of ATP to the transfer of proteins into and across the cell membrane, serving as an ATP-driven molecular motor driving the stepwise translocation of polypeptide chains across the membrane. The sequence is that of Protein translocase subunit SecA from Syntrophus aciditrophicus (strain SB).